We begin with the raw amino-acid sequence, 65 residues long: UPF0434 protein BBta_0300 (65 aa).

Belongs to the UPF0434 family.

The sequence is that of UPF0434 protein BBta_0300 from Bradyrhizobium sp. (strain BTAi1 / ATCC BAA-1182).